Consider the following 692-residue polypeptide: Putative ESX-1 scaffolding and assembly protein SaeA (692 aa).

The segment covering Met1–Pro21 has biased composition (basic and acidic residues). 2 disordered regions span residues Met1–Leu23 and Pro87–Phe134. Over residues Ala89 to Gly107 the composition is skewed to pro residues.

In terms of biological role, may be involved in assembly of the ESX-1 / type VII specialized secretion system (T7SS), which exports several proteins including EsxA and EsxB. Involved in DNA conjugation in recipient (MKD8) but not donor (mc(2)155) strain. This chain is Putative ESX-1 scaffolding and assembly protein SaeA (saeA), found in Mycolicibacterium smegmatis (strain MKD8) (Mycobacterium smegmatis).